The chain runs to 202 residues: Cryptic protein (202 aa).

Residues 1–35 (MRANSPTQGISLKMHQARPLFLVTVALQLIGLGYS) form the signal peptide. N65 carries N-linked (GlcNAc...) asparagine glycosylation. Residues 94-123 (PVSRCCHNGGTCVLGSFCVCPAYFTGRYCE) form the EGF-like domain. Cystine bridges form between C98-C105, C99-C111, and C113-C122. D166 carries GPI-anchor amidated aspartate lipidation. The propeptide at 167–202 (LKSFLSSGARGSRECSIPSLLLLVLCLLLQGVAGKG) is removed in mature form.

Belongs to the EGF-CFC (Cripto-1/FRL1/Cryptic) family. Post-translationally, N-glycosylated. In terms of tissue distribution, no expressed in adult tissues.

The protein resides in the cell membrane. The protein localises to the secreted. In terms of biological role, nodal coreceptor involved in the correct establishment of the left-right axis. May play a role in mesoderm and/or neural patterning during gastrulation. The sequence is that of Cryptic protein (Cfc1) from Mus musculus (Mouse).